A 1043-amino-acid polypeptide reads, in one-letter code: Unconventional myosin-Ia (1043 aa).

The region spanning Val-8 to Arg-694 is the Myosin motor domain. Position 101 to 108 (Gly-101 to Thr-108) interacts with ATP. An actin-binding region spans residues Val-571–Asp-593. IQ domains follow at residues Leu-697–Gln-719, Met-720–Lys-742, and Ile-743–Ala-772. Residues Lys-858–Val-1042 form the TH1 domain.

It belongs to the TRAFAC class myosin-kinesin ATPase superfamily. Myosin family. In terms of processing, phosphorylated by ALPK1.

Functionally, involved in directing the movement of organelles along actin filaments. The sequence is that of Unconventional myosin-Ia (Myo1a) from Mus musculus (Mouse).